Consider the following 438-residue polypeptide: 3-phosphoshikimate 1-carboxyvinyltransferase (438 aa).

Residues Lys-21, Ser-22, and Arg-26 each coordinate 3-phosphoshikimate. Lys-21 contacts phosphoenolpyruvate. Residues Gly-95 and Arg-123 each contribute to the phosphoenolpyruvate site. The 3-phosphoshikimate site is built by Ser-167, Gln-169, Asp-315, and Lys-342. Residue Gln-169 participates in phosphoenolpyruvate binding. Asp-315 acts as the Proton acceptor in catalysis. Phosphoenolpyruvate is bound by residues Arg-346 and Arg-387.

The protein belongs to the EPSP synthase family. In terms of assembly, monomer.

Its subcellular location is the cytoplasm. It catalyses the reaction 3-phosphoshikimate + phosphoenolpyruvate = 5-O-(1-carboxyvinyl)-3-phosphoshikimate + phosphate. The protein operates within metabolic intermediate biosynthesis; chorismate biosynthesis; chorismate from D-erythrose 4-phosphate and phosphoenolpyruvate: step 6/7. Its function is as follows. Catalyzes the transfer of the enolpyruvyl moiety of phosphoenolpyruvate (PEP) to the 5-hydroxyl of shikimate-3-phosphate (S3P) to produce enolpyruvyl shikimate-3-phosphate and inorganic phosphate. The sequence is that of 3-phosphoshikimate 1-carboxyvinyltransferase from Coxiella burnetii (strain CbuK_Q154) (Coxiella burnetii (strain Q154)).